Consider the following 183-residue polypeptide: Ribosome-recycling factor (183 aa).

The disordered stretch occupies residues Asp134–Asp156.

It belongs to the RRF family.

Its subcellular location is the cytoplasm. In terms of biological role, responsible for the release of ribosomes from messenger RNA at the termination of protein biosynthesis. May increase the efficiency of translation by recycling ribosomes from one round of translation to another. The protein is Ribosome-recycling factor of Leptospira biflexa serovar Patoc (strain Patoc 1 / Ames).